The chain runs to 1522 residues: Rho guanine nucleotide exchange factor 11 (1522 aa).

The disordered stretch occupies residues 1–40 (MSVRLPQSIDRLSSLSSLGDSAPERKSPSHHRQPSDASET). A phosphoserine mark is found at Ser-2, Ser-14, Ser-16, and Ser-35. Positions 47–126 (CVIIQKDQHG…LTLLGSSPSS (80 aa)) constitute a PDZ domain. Disordered regions lie at residues 128-175 (GISG…PEVQ) and 200-231 (YGDT…ERFP). Over residues 149-161 (PSPPPPPPLPPPQ) the composition is skewed to pro residues. Ser-245 and Ser-251 each carry phosphoserine. At Thr-254 the chain carries Phosphothreonine. Ser-255 and Ser-271 each carry phosphoserine. A disordered region spans residues 263-286 (AQHHRRQGSDAAVPSTGDQGVDQS). One can recognise an RGSL domain in the interval 306 to 486 (ESDIIFQDLE…NTYMSHAGIR (181 aa)). A coiled-coil region spans residues 444–470 (LRERQVAEKQLAALGDILSKYEEDRSA). The tract at residues 490–555 (ARPSNTAEKA…SSQSTFHIPL (66 aa)) is disordered. Positions 521 to 533 (SKKEKDALEDKKR) are enriched in basic and acidic residues. Phosphoserine is present on residues Ser-556, Ser-635, and Ser-663. The segment at 573–680 (ENNQQYDAPE…FTPKMGRRSI (108 aa)) is disordered. The segment covering 601–637 (DSSRSEIRLGRSESLKGREEMKRSRKAENVPRSRSDV) has biased composition (basic and acidic residues). Residues 651-664 (SASSSTSSLSTRSL) show a composition bias toward low complexity. 2 positions are modified to phosphothreonine: Thr-668 and Thr-672. A DH domain is found at 734 to 923 (DRQEVINELF…REILKYVNEA (190 aa)). The PH domain occupies 965–1079 (KMIHEGPLTW…WMELLEEAVR (115 aa)). Residues 1084 to 1141 (HPGAAPMPVHPPPPGPREPAQQGPTPSRVELDDSDVFHGEPEPEELPGGTGSQQRVQG) form a disordered region. The segment covering 1091 to 1100 (PVHPPPPGPR) has biased composition (pro residues). A compositionally biased stretch (basic and acidic residues) spans 1112-1124 (VELDDSDVFHGEP). Residue Ser-1155 is modified to Phosphoserine. 3 disordered regions span residues 1223-1320 (ETQA…AGGY), 1332-1423 (KVVP…RDVG), and 1453-1522 (LGGE…SPGP). The span at 1236–1245 (PTPSVISVTS) shows a compositional bias: polar residues. Ser-1295 and Ser-1300 each carry phosphoserine. A compositionally biased stretch (low complexity) spans 1338-1353 (PESGQSEPGPPEVEGG). Phosphoserine is present on residues Ser-1457 and Ser-1458. Thr-1462 and Thr-1475 each carry phosphothreonine. Ser-1480 is modified (phosphoserine). Residues 1503–1513 (DGSDAPLEDST) show a composition bias toward acidic residues.

Interacts with GNA12 and GNA13 through the RGS domain. Interacts with RHOA, PLXNB1 and PLXNB2. Interacts with SLC1A6. Interacts (via DH domain) with GCSAM (via C-terminus). Found in a complex with ARHGEF11 and ARHGEF12; binding to ARHGEF11 and ARHGEF12 enhances CDC42 GEF activity of PLEKHG4B, and PLEKHG4B, in turn, inhibits ARHGEF11- and ARHGEF12-mediated RHOA activation. Post-translationally, phosphorylated by MAP kinase p38 (MAPK11, MAPK12, MAPK13 and/or MAPK14). In terms of processing, ubiquitinated by the BCR(KLHL20) E3 ubiquitin ligase complex when previously phosphorylated by MAP kinase p38 (MAPK11, MAPK12, MAPK13 and/or MAPK14), leading to its degradation, thereby restricting RhoA activity and facilitating growth cone spreading and neurite outgrowth. As to expression, ubiquitously expressed.

It localises to the cytoplasm. The protein resides in the membrane. May play a role in the regulation of RhoA GTPase by guanine nucleotide-binding alpha-12 (GNA12) and alpha-13 (GNA13). Acts as guanine nucleotide exchange factor (GEF) for RhoA GTPase and may act as GTPase-activating protein (GAP) for GNA12 and GNA13. Involved in neurotrophin-induced neurite outgrowth. This is Rho guanine nucleotide exchange factor 11 (ARHGEF11) from Homo sapiens (Human).